Consider the following 272-residue polypeptide: 3-methyl-2-oxobutanoate hydroxymethyltransferase (272 aa).

Mg(2+) contacts are provided by aspartate 43 and aspartate 82. 3-methyl-2-oxobutanoate contacts are provided by residues 43 to 44 (DS), aspartate 82, and lysine 112. Glutamate 114 is a binding site for Mg(2+). Glutamate 179 acts as the Proton acceptor in catalysis.

Belongs to the PanB family. Homodecamer; pentamer of dimers. The cofactor is Mg(2+).

The protein localises to the cytoplasm. It carries out the reaction 3-methyl-2-oxobutanoate + (6R)-5,10-methylene-5,6,7,8-tetrahydrofolate + H2O = 2-dehydropantoate + (6S)-5,6,7,8-tetrahydrofolate. It functions in the pathway cofactor biosynthesis; (R)-pantothenate biosynthesis; (R)-pantoate from 3-methyl-2-oxobutanoate: step 1/2. Functionally, catalyzes the reversible reaction in which hydroxymethyl group from 5,10-methylenetetrahydrofolate is transferred onto alpha-ketoisovalerate to form ketopantoate. This Staphylococcus aureus (strain bovine RF122 / ET3-1) protein is 3-methyl-2-oxobutanoate hydroxymethyltransferase.